Consider the following 117-residue polypeptide: Small ribosomal subunit protein bS6 (117 aa).

Belongs to the bacterial ribosomal protein bS6 family.

Functionally, binds together with bS18 to 16S ribosomal RNA. This chain is Small ribosomal subunit protein bS6, found in Trichodesmium erythraeum (strain IMS101).